Reading from the N-terminus, the 71-residue chain is UPF0346 protein BCE_2336 (71 aa).

This sequence belongs to the UPF0346 family.

The protein is UPF0346 protein BCE_2336 of Bacillus cereus (strain ATCC 10987 / NRS 248).